Reading from the N-terminus, the 458-residue chain is Fasciclin-like arabinogalactan protein 17 (458 aa).

A signal peptide spans 1-30; the sequence is MDRRIYGGSAVIHLFLFFSVLIFSAASALS. In terms of domain architecture, FAS1 1 spans 43–184; it reads NSNSVLVALL…GLIHGIERLL (142 aa). N-linked (GlcNAc...) asparagine glycosylation occurs at Asn-80. The segment at 207 to 262 is disordered; sequence PEGAPEVDPRTNRLKKPAAPVPAGSPPALPIQSAMAPGPSLAPAPAPGPGGKQHHF. Residues 225 to 235 are compositionally biased toward pro residues; the sequence is APVPAGSPPAL. Residues 268–411 form the FAS1 2 domain; the sequence is VKDFIHTLLH…ISVQGIDGVL (144 aa). An N-linked (GlcNAc...) asparagine glycan is attached at Asn-290.

It belongs to the fasciclin-like AGP family.

The protein resides in the secreted. Its function is as follows. May be a cell surface adhesion protein. The sequence is that of Fasciclin-like arabinogalactan protein 17 (FLA17) from Arabidopsis thaliana (Mouse-ear cress).